A 412-amino-acid polypeptide reads, in one-letter code: MQQLIDNLKKRGILDNSSAGLESLTVPVSAYLGFDPTAPSLHIGHWIGICFLRRLAAYGITPVALVGGATGMIGDPSGKSVERSLLDQAQVLDNSKKIAAALASYLPGIRIVNNADWLGSLSMVDFLRDVGKHFRLGSMLAKDVVKQRVYSEEGISYTEFSYLLLQSYDFAHLFKEHNVVLQCGGSDQWGNITSGIDYIRRRGLGQAYGLTYPLLTDSKGKKIGKTESGTIWLDPALTPPYELFQYFLRLPDQEISKVMRTLTLLDNEEIFALDERLTSDPQAVKKYIAEVIVKDVHGSEGLAQAQAATESFFASKGKSITEAELVALVESGVGVKVARTDLIGKRWLDIVVELGFCSSRGQARRLIQQRGLYINQEPLADEQSILDGTQLCFDRYVLLSQGKRKKQVIDLN.

Residue tyrosine 31 participates in L-tyrosine binding. A 'HIGH' region motif is present at residues 36–45 (PTAPSLHIGH). 2 residues coordinate L-tyrosine: tyrosine 162 and glutamine 166. The short motif at 222 to 226 (KIGKT) is the 'KMSKS' region element. Residue lysine 225 coordinates ATP. The 67-residue stretch at 345–411 (KRWLDIVVEL…GKRKKQVIDL (67 aa)) folds into the S4 RNA-binding domain.

Belongs to the class-I aminoacyl-tRNA synthetase family. TyrS type 1 subfamily. Homodimer.

It localises to the cytoplasm. It catalyses the reaction tRNA(Tyr) + L-tyrosine + ATP = L-tyrosyl-tRNA(Tyr) + AMP + diphosphate + H(+). Catalyzes the attachment of tyrosine to tRNA(Tyr) in a two-step reaction: tyrosine is first activated by ATP to form Tyr-AMP and then transferred to the acceptor end of tRNA(Tyr). The chain is Tyrosine--tRNA ligase from Chlamydia trachomatis serovar A (strain ATCC VR-571B / DSM 19440 / HAR-13).